Consider the following 593-residue polypeptide: MSQQTEPDDDAALDGDEPGAYGKDERLRSREVTEGPERAPHRAMFRAMGYDDEDLSSPLIGVPNPAADITPCNVHLDDVAESALEGIDEAGGMPIEFGTITISDAISMGTEGMKASLISREVIADSVELVSFGERMDALVTVAGCDKNLPGMMMAAIRTDLPSVFLYGGSIMPGQHEGRDVTIVQVFEGVGAYAQGEMSGDELDDLERNACPGAGSCGGMFTANTMASLSEALGLAPLGSASPPAENHERYAVARRAGELAVEVVEEDRHPSDILTRTSFENAIALQTAMGGSTNAVLHLLALAAEAGIDLDIEDFDAISRRTPKIADLQPGGDRVMNDLHEIGGVPVVIRRLMEADLFDGSQLTVTGRTIEEELAHLESEHGLPTDDEIDADFLYPVDDPKEAEGAIKILTGNLAPDGAVLKVTGDDEFYHEGPARVFENEEDAMKYVQEGHIESGDVIVIRNEGPEGGPGMREMLGVTAAVVGAGHEDDVALLTDGRFSGGTRGPMIGHIAPEAFVGGPIGALEDGDHITVDIPDRTIEVDLSDSELERRLDERDDPEPAYTNGVVAKYGSLFGSAANGAVTNPGLHNDQH.

A compositionally biased stretch (acidic residues) spans 1–17; the sequence is MSQQTEPDDDAALDGDE. The interval 1-40 is disordered; sequence MSQQTEPDDDAALDGDEPGAYGKDERLRSREVTEGPERAP. Basic and acidic residues predominate over residues 22 to 40; sequence GKDERLRSREVTEGPERAP. Cys72 lines the [2Fe-2S] cluster pocket. Asp104 is a binding site for Mg(2+). Cys145 contributes to the [2Fe-2S] cluster binding site. Mg(2+)-binding residues include Asp146 and Lys147. Lys147 carries the N6-carboxylysine modification. Cys217 lines the [2Fe-2S] cluster pocket. Mg(2+) is bound at residue Glu475. Ser501 acts as the Proton acceptor in catalysis.

This sequence belongs to the IlvD/Edd family. As to quaternary structure, homodimer. The cofactor is [2Fe-2S] cluster. Requires Mg(2+) as cofactor.

It carries out the reaction (2R)-2,3-dihydroxy-3-methylbutanoate = 3-methyl-2-oxobutanoate + H2O. It catalyses the reaction (2R,3R)-2,3-dihydroxy-3-methylpentanoate = (S)-3-methyl-2-oxopentanoate + H2O. It functions in the pathway amino-acid biosynthesis; L-isoleucine biosynthesis; L-isoleucine from 2-oxobutanoate: step 3/4. It participates in amino-acid biosynthesis; L-valine biosynthesis; L-valine from pyruvate: step 3/4. Its function is as follows. Functions in the biosynthesis of branched-chain amino acids. Catalyzes the dehydration of (2R,3R)-2,3-dihydroxy-3-methylpentanoate (2,3-dihydroxy-3-methylvalerate) into 2-oxo-3-methylpentanoate (2-oxo-3-methylvalerate) and of (2R)-2,3-dihydroxy-3-methylbutanoate (2,3-dihydroxyisovalerate) into 2-oxo-3-methylbutanoate (2-oxoisovalerate), the penultimate precursor to L-isoleucine and L-valine, respectively. The chain is Dihydroxy-acid dehydratase from Natronomonas pharaonis (strain ATCC 35678 / DSM 2160 / CIP 103997 / JCM 8858 / NBRC 14720 / NCIMB 2260 / Gabara) (Halobacterium pharaonis).